A 1054-amino-acid chain; its full sequence is Acid trehalase (1054 aa).

Positions 1 to 21 (MRFKSVFTLLPLLAQLPSGGA) are cleaved as a signal peptide. Residues asparagine 47, asparagine 135, asparagine 176, asparagine 283, and asparagine 307 are each glycosylated (N-linked (GlcNAc...) asparagine). 448 to 449 (WD) lines the substrate pocket. Asparagine 493, asparagine 513, asparagine 570, and asparagine 578 each carry an N-linked (GlcNAc...) asparagine glycan. The Proton donor role is filled by glutamate 584. Residues asparagine 618 and asparagine 644 are each glycosylated (N-linked (GlcNAc...) asparagine). 650–651 (KQ) serves as a coordination point for substrate. 9 N-linked (GlcNAc...) asparagine glycosylation sites follow: asparagine 665, asparagine 734, asparagine 803, asparagine 826, asparagine 838, asparagine 903, asparagine 937, asparagine 966, and asparagine 992.

The protein belongs to the glycosyl hydrolase 65 family.

The catalysed reaction is alpha,alpha-trehalose + H2O = alpha-D-glucose + beta-D-glucose. The polypeptide is Acid trehalase (treA) (Emericella nidulans (strain FGSC A4 / ATCC 38163 / CBS 112.46 / NRRL 194 / M139) (Aspergillus nidulans)).